The following is a 545-amino-acid chain: Probable bifunctional tRNA threonylcarbamoyladenosine biosynthesis protein (545 aa).

The kae1 stretch occupies residues 1–329 (MKNTFILGIE…YRTDDVKVTW (329 aa)). The Fe cation site is built by His113, His117, and Tyr134. Residues 134–138 (YVSGA), Asp166, Gly179, Glu183, and Asn262 contribute to the L-threonylcarbamoyladenylate site. Fe cation is bound at residue Asp290. The 206-residue stretch at 340–545 (EISPGTSLKL…EEIKKRARYA (206 aa)) folds into the Protein kinase domain. ATP is bound by residues 353–361 (LDNGAEAIV) and Lys375. The Proton acceptor; for kinase activity role is filled by Asp462.

This sequence in the N-terminal section; belongs to the KAE1 / TsaD family. It in the C-terminal section; belongs to the protein kinase superfamily. Tyr protein kinase family. BUD32 subfamily. Component of the KEOPS complex that consists of Kae1, Bud32, Cgi121 and Pcc1; the whole complex dimerizes. Fe(2+) serves as cofactor.

Its subcellular location is the cytoplasm. The catalysed reaction is L-seryl-[protein] + ATP = O-phospho-L-seryl-[protein] + ADP + H(+). It carries out the reaction L-threonyl-[protein] + ATP = O-phospho-L-threonyl-[protein] + ADP + H(+). It catalyses the reaction L-threonylcarbamoyladenylate + adenosine(37) in tRNA = N(6)-L-threonylcarbamoyladenosine(37) in tRNA + AMP + H(+). Functionally, required for the formation of a threonylcarbamoyl group on adenosine at position 37 (t(6)A37) in tRNAs that read codons beginning with adenine. Is a component of the KEOPS complex that is probably involved in the transfer of the threonylcarbamoyl moiety of threonylcarbamoyl-AMP (TC-AMP) to the N6 group of A37. The Kae1 domain likely plays a direct catalytic role in this reaction. The Bud32 domain probably displays kinase activity that regulates Kae1 function. In Methanosarcina barkeri (strain Fusaro / DSM 804), this protein is Probable bifunctional tRNA threonylcarbamoyladenosine biosynthesis protein.